We begin with the raw amino-acid sequence, 96 residues long: Acetolactate synthase isozyme 1 small subunit (96 aa).

Residues 10-83 (ILELTVRNHP…DVVKVQRNQS (74 aa)) form the ACT domain.

It belongs to the acetolactate synthase small subunit family. As to quaternary structure, dimer of large and small chains.

It catalyses the reaction 2 pyruvate + H(+) = (2S)-2-acetolactate + CO2. The protein operates within amino-acid biosynthesis; L-isoleucine biosynthesis; L-isoleucine from 2-oxobutanoate: step 1/4. Its pathway is amino-acid biosynthesis; L-valine biosynthesis; L-valine from pyruvate: step 1/4. The protein is Acetolactate synthase isozyme 1 small subunit (ilvN) of Escherichia coli O157:H7.